The primary structure comprises 257 residues: Snake venom serine protease Haly-2 (257 aa).

The N-terminal stretch at 1-18 is a signal peptide; sequence MVLIRVLANLLILQLSYA. Positions 19–24 are excised as a propeptide; the sequence is QKSSEL. Positions 25 to 248 constitute a Peptidase S1 domain; that stretch reads IIGGDECNIN…HLEWIRSIIA (224 aa). 6 disulfide bridges follow: Cys31–Cys162, Cys49–Cys65, Cys97–Cys255, Cys141–Cys209, Cys173–Cys188, and Cys199–Cys224. Catalysis depends on His64, which acts as the Charge relay system. N-linked (GlcNAc...) asparagine glycosylation occurs at Asn100. Asp109 acts as the Charge relay system in catalysis. Ser203 serves as the catalytic Charge relay system.

Belongs to the peptidase S1 family. Snake venom subfamily. As to quaternary structure, monomer. In terms of tissue distribution, expressed by the venom gland.

Its subcellular location is the secreted. Its function is as follows. Snake venom serine protease that may act in the hemostasis system of the prey. The chain is Snake venom serine protease Haly-2 from Gloydius brevicauda (Korean slamosa snake).